The chain runs to 297 residues: HTH-type transcriptional regulator ArgP (297 aa).

Residues 4-60 (PDYRTLQALDAVIRERGFERAAQKLCITQSAVSQRIKQLENMFGQPLLVRTVPPRPT) enclose the HTH lysR-type domain. The H-T-H motif DNA-binding region spans 21–40 (FERAAQKLCITQSAVSQRIK).

It belongs to the LysR transcriptional regulatory family. As to quaternary structure, homodimer.

Functionally, controls the transcription of genes involved in arginine and lysine metabolism. In Salmonella dublin (strain CT_02021853), this protein is HTH-type transcriptional regulator ArgP.